We begin with the raw amino-acid sequence, 128 residues long: Probable cystatin-15 (128 aa).

Residues 1–20 (MFWKLPLLLGLLALGPHVCS) form the signal peptide. A disulfide bridge links Cys82 with Cys92. An N-linked (GlcNAc...) asparagine glycan is attached at Asn104. Residues Cys105 and Cys125 are joined by a disulfide bond.

The protein belongs to the cystatin family.

Its subcellular location is the secreted. The sequence is that of Probable cystatin-15 from Bos taurus (Bovine).